The chain runs to 518 residues: Lysine 5,6-aminomutase alpha subunit (518 aa).

Pyridoxal 5'-phosphate contacts are provided by residues 184 to 189, serine 238, tyrosine 263, arginine 268, and asparagine 299; that span reads RTTGQS.

It belongs to the KamD family. As to quaternary structure, heterotetramer of 2 alpha and 2 beta subunits. The cofactor is adenosylcob(III)alamin. Pyridoxal 5'-phosphate is required as a cofactor.

The enzyme catalyses (3S)-3,6-diaminohexanoate = (3S,5S)-3,5-diaminohexanoate. It carries out the reaction D-lysine = (2R,5S)-2,5-diaminohexanoate. Its pathway is amino-acid degradation; L-lysine degradation via acetate pathway. In terms of biological role, catalyzes the migration of the L-beta-lysine and D-lysine epsilon amino group to the delta carbon to produce 3,5-diaminohexanoate and 2,5-diaminohexanoate, respectively. The sequence is that of Lysine 5,6-aminomutase alpha subunit from Fusobacterium nucleatum subsp. nucleatum (strain ATCC 25586 / DSM 15643 / BCRC 10681 / CIP 101130 / JCM 8532 / KCTC 2640 / LMG 13131 / VPI 4355).